The sequence spans 201 residues: Anthranilate synthase component II (201 aa).

The Glutamine amidotransferase type-1 domain occupies 3-196 (DILLLDNIDS…LAWAQRKLEP (194 aa)). 57-59 (GPG) contributes to the L-glutamine binding site. Residue Cys-84 is the Nucleophile; for GATase activity of the active site. Residues Gln-88 and 134–135 (SL) contribute to the L-glutamine site. Active-site for GATase activity residues include His-170 and Glu-172.

As to quaternary structure, tetramer of two components I and two components II.

The catalysed reaction is chorismate + L-glutamine = anthranilate + pyruvate + L-glutamate + H(+). The enzyme catalyses N-(5-phospho-beta-D-ribosyl)anthranilate + diphosphate = 5-phospho-alpha-D-ribose 1-diphosphate + anthranilate. It participates in amino-acid biosynthesis; L-tryptophan biosynthesis; L-tryptophan from chorismate: step 1/5. It functions in the pathway amino-acid biosynthesis; L-tryptophan biosynthesis; L-tryptophan from chorismate: step 2/5. The protein is Anthranilate synthase component II (trpG-TRPD) of Shigella dysenteriae.